Here is a 385-residue protein sequence, read N- to C-terminus: Glutamate 5-kinase (385 aa).

Lysine 17 is a binding site for ATP. Substrate is bound by residues serine 64, aspartate 151, and asparagine 165. Serine 185–aspartate 186 provides a ligand contact to ATP. The PUA domain occupies serine 291–asparagine 367.

It belongs to the glutamate 5-kinase family.

Its subcellular location is the cytoplasm. The catalysed reaction is L-glutamate + ATP = L-glutamyl 5-phosphate + ADP. Its pathway is amino-acid biosynthesis; L-proline biosynthesis; L-glutamate 5-semialdehyde from L-glutamate: step 1/2. Catalyzes the transfer of a phosphate group to glutamate to form L-glutamate 5-phosphate. The polypeptide is Glutamate 5-kinase (Methanosarcina acetivorans (strain ATCC 35395 / DSM 2834 / JCM 12185 / C2A)).